Here is a 158-residue protein sequence, read N- to C-terminus: Transcriptional repressor NrdR (158 aa).

A zinc finger lies at 3-34 (CPYCGYPDSRVIDSRPTDDNTAIRRRRECLKC). Residues 49 to 139 (ILVIKKDNRR…VYRQFKDINT (91 aa)) form the ATP-cone domain.

It belongs to the NrdR family. Zn(2+) serves as cofactor.

In terms of biological role, negatively regulates transcription of bacterial ribonucleotide reductase nrd genes and operons by binding to NrdR-boxes. In Caldanaerobacter subterraneus subsp. tengcongensis (strain DSM 15242 / JCM 11007 / NBRC 100824 / MB4) (Thermoanaerobacter tengcongensis), this protein is Transcriptional repressor NrdR.